A 210-amino-acid polypeptide reads, in one-letter code: Na(+)-translocating NADH-quinone reductase subunit D (210 aa).

6 helical membrane-spanning segments follow: residues 11 to 31 (ILAP…VCSA), 42 to 62 (FVMT…VSLI), 72 to 92 (IIVQ…VLKA), 103 to 123 (VFVG…AFAM), 131 to 151 (FIDG…VGFF), and 178 to 198 (NGLM…IWAI).

This sequence belongs to the NqrDE/RnfAE family. Composed of six subunits; NqrA, NqrB, NqrC, NqrD, NqrE and NqrF.

The protein localises to the cell inner membrane. It carries out the reaction a ubiquinone + n Na(+)(in) + NADH + H(+) = a ubiquinol + n Na(+)(out) + NAD(+). Functionally, NQR complex catalyzes the reduction of ubiquinone-1 to ubiquinol by two successive reactions, coupled with the transport of Na(+) ions from the cytoplasm to the periplasm. NqrA to NqrE are probably involved in the second step, the conversion of ubisemiquinone to ubiquinol. This is Na(+)-translocating NADH-quinone reductase subunit D from Vibrio atlanticus (strain LGP32) (Vibrio splendidus (strain Mel32)).